Consider the following 574-residue polypeptide: Proline--tRNA ligase (574 aa).

Belongs to the class-II aminoacyl-tRNA synthetase family. ProS type 1 subfamily. As to quaternary structure, homodimer.

Its subcellular location is the cytoplasm. It catalyses the reaction tRNA(Pro) + L-proline + ATP = L-prolyl-tRNA(Pro) + AMP + diphosphate. Its function is as follows. Catalyzes the attachment of proline to tRNA(Pro) in a two-step reaction: proline is first activated by ATP to form Pro-AMP and then transferred to the acceptor end of tRNA(Pro). As ProRS can inadvertently accommodate and process non-cognate amino acids such as alanine and cysteine, to avoid such errors it has two additional distinct editing activities against alanine. One activity is designated as 'pretransfer' editing and involves the tRNA(Pro)-independent hydrolysis of activated Ala-AMP. The other activity is designated 'posttransfer' editing and involves deacylation of mischarged Ala-tRNA(Pro). The misacylated Cys-tRNA(Pro) is not edited by ProRS. In Pseudoalteromonas translucida (strain TAC 125), this protein is Proline--tRNA ligase.